The chain runs to 53 residues: uncharacterized protein (53 aa).

Its subcellular location is the mitochondrion matrix. The protein localises to the kinetoplast. This is an uncharacterized protein from Trypanosoma brucei brucei.